The following is a 374-amino-acid chain: Alpha-N-acetylgalactosaminide alpha-2,6-sialyltransferase 2 (374 aa).

Residues 1–7 (MGLPRGS) lie on the Cytoplasmic side of the membrane. A helical; Signal-anchor for type II membrane protein transmembrane segment spans residues 8 to 28 (FFWLLLLLTAACSGLLFALYF). Topologically, residues 29–374 (SAVQRYPGPA…KAGILQLYQR (346 aa)) are lumenal. 2 disulfide bridges follow: cysteine 66–cysteine 148 and cysteine 151–cysteine 317. Asparagine 85 and asparagine 130 each carry an N-linked (GlcNAc...) asparagine glycan. CMP-N-acetyl-beta-neuraminate is bound at residue asparagine 156. N-linked (GlcNAc...) asparagine glycosylation occurs at asparagine 161. The CMP-N-acetyl-beta-neuraminate site is built by asparagine 179, serine 304, and histidine 336.

The protein belongs to the glycosyltransferase 29 family. As to expression, expressed in skeletal muscle, heart, kidney, placenta, lung and leukocytes.

It localises to the golgi apparatus membrane. The catalysed reaction is a beta-D-galactosyl-(1-&gt;3)-N-acetyl-alpha-D-galactosaminyl derivative + CMP-N-acetyl-beta-neuraminate = a beta-D-galactosyl-(1-&gt;3)-[N-acetyl-alpha-neuraminyl-(2-&gt;6)]-N-acetyl-alpha-D-galactosaminyl derivative + CMP + H(+). It catalyses the reaction a 3-O-[N-acetyl-alpha-D-galactosaminyl]-L-threonyl-[protein] + CMP-N-acetyl-beta-neuraminate = a 3-O-[N-acetyl-alpha-neuraminosyl-(2-&gt;6)-N-acetyl-alpha-D-galactosaminyl]-L-threonyl-[protein] + CMP + H(+). It carries out the reaction a 3-O-[N-acetyl-alpha-neuraminyl-(2-&gt;3)-beta-D-galactosyl-(1-&gt;3)-N-acetyl-alpha-D-galactosaminyl]-L-threonyl-[protein] + CMP-N-acetyl-beta-neuraminate = a 3-O-{alpha-Neu5Ac-(2-&gt;3)-beta-D-Gal-(1-&gt;3)-[alpha-Neu5Ac-(2-&gt;6)]-alpha-D-GalNAc}-L-threonyl-[protein] + CMP + H(+). Its pathway is protein modification; protein glycosylation. Functionally, catalyzes the transfer of N-acetylneuraminyl groups onto glycan chains in glycoproteins. Conjugates sialic acid with an alpha-2-6 linkage to N-acetylgalactosamine (GalNAc) glycan chains linked to serine or threonine in glycoproteins. Sialylates alphaGalNAc- and Galbeta1-&gt;3GalNAc-O-Ser/Thr epitopes also known as Tn and T antigens. The sequence is that of Alpha-N-acetylgalactosaminide alpha-2,6-sialyltransferase 2 (ST6GALNAC2) from Homo sapiens (Human).